The primary structure comprises 223 residues: Large ribosomal subunit protein uL3 (223 aa).

The protein belongs to the universal ribosomal protein uL3 family. As to quaternary structure, part of the 50S ribosomal subunit. Forms a cluster with proteins L14 and L19.

Its function is as follows. One of the primary rRNA binding proteins, it binds directly near the 3'-end of the 23S rRNA, where it nucleates assembly of the 50S subunit. The chain is Large ribosomal subunit protein uL3 from Mycoplasma capricolum subsp. capricolum (strain California kid / ATCC 27343 / NCTC 10154).